The sequence spans 271 residues: GPN-loop GTPase 3 (271 aa).

Residue 13 to 18 coordinates GTP; it reads GAGKST. The Gly-Pro-Asn (GPN)-loop; involved in dimer interface motif lies at 70-72; that stretch reads GPN. Position 173-176 (173-176) interacts with GTP; sequence SKLD.

It belongs to the GPN-loop GTPase family. Heterodimers with GPN1 or GPN2. Binds to RNA polymerase II (RNAPII).

Functionally, small GTPase required for proper nuclear import of RNA polymerase II and III (RNAPII and RNAPIII). May act at an RNAP assembly step prior to nuclear import. The chain is GPN-loop GTPase 3 from Kluyveromyces lactis (strain ATCC 8585 / CBS 2359 / DSM 70799 / NBRC 1267 / NRRL Y-1140 / WM37) (Yeast).